Consider the following 213-residue polypeptide: Transcriptional regulatory protein CrdR (213 aa).

Residues 4 to 119 form the Response regulatory domain; it reads KIFLLEDDYL…ELEARIKRFF (116 aa). Asp53 is modified (4-aspartylphosphate). Positions 121–212 form a DNA-binding region, ompR/PhoB-type; sequence DDPIEIMPNI…HKGVGYRFNP (92 aa).

Post-translationally, phosphorylated by CrdS.

Functionally, member of the two-component regulatory system CrdR/CrdS that induces the transcriptional induction of the copper resistance determinant CrdA. Upon phosphorylation by CrdS, functions as a transcriptional regulator by direct binding to promoter regions of target genes including the crdA promoter or nitric oxide-responsive gene promoters. In Helicobacter pylori (strain ATCC 700392 / 26695) (Campylobacter pylori), this protein is Transcriptional regulatory protein CrdR.